The chain runs to 725 residues: Fatty acid oxidation complex subunit alpha (725 aa).

Positions 1–189 (MLYKGDTLYL…KIGLVDGVVK (189 aa)) are enoyl-CoA hydratase/isomerase. Asp296 lines the substrate pocket. The interval 311–725 (ETPKQAAVLG…RLNQPVRLVL (415 aa)) is 3-hydroxyacyl-CoA dehydrogenase. NAD(+) contacts are provided by residues Met324, Asp343, 400–402 (VVE), Lys407, and Ser429. Catalysis depends on His450, which acts as the For 3-hydroxyacyl-CoA dehydrogenase activity. Asn453 serves as a coordination point for NAD(+). Substrate is bound by residues Asn500 and Tyr660.

The protein in the N-terminal section; belongs to the enoyl-CoA hydratase/isomerase family. This sequence in the C-terminal section; belongs to the 3-hydroxyacyl-CoA dehydrogenase family. In terms of assembly, heterotetramer of two alpha chains (FadB) and two beta chains (FadA).

It catalyses the reaction a (3S)-3-hydroxyacyl-CoA + NAD(+) = a 3-oxoacyl-CoA + NADH + H(+). It carries out the reaction a (3S)-3-hydroxyacyl-CoA = a (2E)-enoyl-CoA + H2O. The enzyme catalyses a 4-saturated-(3S)-3-hydroxyacyl-CoA = a (3E)-enoyl-CoA + H2O. The catalysed reaction is (3S)-3-hydroxybutanoyl-CoA = (3R)-3-hydroxybutanoyl-CoA. It catalyses the reaction a (3Z)-enoyl-CoA = a 4-saturated (2E)-enoyl-CoA. It carries out the reaction a (3E)-enoyl-CoA = a 4-saturated (2E)-enoyl-CoA. It functions in the pathway lipid metabolism; fatty acid beta-oxidation. In terms of biological role, involved in the aerobic and anaerobic degradation of long-chain fatty acids via beta-oxidation cycle. Catalyzes the formation of 3-oxoacyl-CoA from enoyl-CoA via L-3-hydroxyacyl-CoA. It can also use D-3-hydroxyacyl-CoA and cis-3-enoyl-CoA as substrate. The protein is Fatty acid oxidation complex subunit alpha of Salmonella paratyphi A (strain ATCC 9150 / SARB42).